The following is a 186-amino-acid chain: Acireductone dioxygenase (186 aa).

Positions 103, 105, 109, and 147 each coordinate Fe(2+). His103, His105, Glu109, and His147 together coordinate Ni(2+).

Belongs to the acireductone dioxygenase (ARD) family. Monomer. Fe(2+) serves as cofactor. The cofactor is Ni(2+).

The enzyme catalyses 1,2-dihydroxy-5-(methylsulfanyl)pent-1-en-3-one + O2 = 3-(methylsulfanyl)propanoate + CO + formate + 2 H(+). It catalyses the reaction 1,2-dihydroxy-5-(methylsulfanyl)pent-1-en-3-one + O2 = 4-methylsulfanyl-2-oxobutanoate + formate + 2 H(+). It functions in the pathway amino-acid biosynthesis; L-methionine biosynthesis via salvage pathway; L-methionine from S-methyl-5-thio-alpha-D-ribose 1-phosphate: step 5/6. Catalyzes 2 different reactions between oxygen and the acireductone 1,2-dihydroxy-3-keto-5-methylthiopentene (DHK-MTPene) depending upon the metal bound in the active site. Fe-containing acireductone dioxygenase (Fe-ARD) produces formate and 2-keto-4-methylthiobutyrate (KMTB), the alpha-ketoacid precursor of methionine in the methionine recycle pathway. Ni-containing acireductone dioxygenase (Ni-ARD) produces methylthiopropionate, carbon monoxide and formate, and does not lie on the methionine recycle pathway. The polypeptide is Acireductone dioxygenase (Parasynechococcus marenigrum (strain WH8102)).